Here is a 256-residue protein sequence, read N- to C-terminus: Imidazole glycerol phosphate synthase subunit HisF (256 aa).

Active-site residues include aspartate 11 and aspartate 130.

Belongs to the HisA/HisF family. As to quaternary structure, heterodimer of HisH and HisF.

Its subcellular location is the cytoplasm. It catalyses the reaction 5-[(5-phospho-1-deoxy-D-ribulos-1-ylimino)methylamino]-1-(5-phospho-beta-D-ribosyl)imidazole-4-carboxamide + L-glutamine = D-erythro-1-(imidazol-4-yl)glycerol 3-phosphate + 5-amino-1-(5-phospho-beta-D-ribosyl)imidazole-4-carboxamide + L-glutamate + H(+). It participates in amino-acid biosynthesis; L-histidine biosynthesis; L-histidine from 5-phospho-alpha-D-ribose 1-diphosphate: step 5/9. In terms of biological role, IGPS catalyzes the conversion of PRFAR and glutamine to IGP, AICAR and glutamate. The HisF subunit catalyzes the cyclization activity that produces IGP and AICAR from PRFAR using the ammonia provided by the HisH subunit. The sequence is that of Imidazole glycerol phosphate synthase subunit HisF from Prochlorococcus marinus (strain MIT 9312).